The primary structure comprises 318 residues: Homeobox-leucine zipper protein ATHB-4 (318 aa).

Disordered regions lie at residues 1–23 and 128–165; these read MGER…KEPS and ARGG…RKKL. Positions 8–17 are enriched in low complexity; that stretch reads LGLSLSLGNS. The segment covering 128 to 140 has biased composition (basic and acidic residues); the sequence is ARGGDENEAERAS. A DNA-binding region (homeobox) is located at residues 160–219; sequence GSRKKLRLSKDQALVLEETFKEHSTLNPKQKLALAKQLNLRARQVEVWFQNRRARTKLKQ. The tract at residues 227 to 248 is leucine-zipper; sequence LKRCCDNLTEENRRLQKEVSEL.

The protein belongs to the HD-ZIP homeobox family. Class II subfamily.

It localises to the nucleus. In terms of biological role, probable transcription factor. This Arabidopsis thaliana (Mouse-ear cress) protein is Homeobox-leucine zipper protein ATHB-4 (ATHB-4).